The sequence spans 105 residues: Large ribosomal subunit protein uL24 (105 aa).

Belongs to the universal ribosomal protein uL24 family. Part of the 50S ribosomal subunit.

Its function is as follows. One of two assembly initiator proteins, it binds directly to the 5'-end of the 23S rRNA, where it nucleates assembly of the 50S subunit. One of the proteins that surrounds the polypeptide exit tunnel on the outside of the subunit. This chain is Large ribosomal subunit protein uL24, found in Staphylococcus haemolyticus (strain JCSC1435).